We begin with the raw amino-acid sequence, 344 residues long: Selenide, water dikinase (344 aa).

Sec-16 is an active-site residue. Sec-16 is a non-standard amino acid (selenocysteine). ATP is bound by residues Lys-19 and 46-48 (TND). Asp-49 is a binding site for Mg(2+). Residues Asp-66, Asp-89, and 135 to 137 (GHT) each bind ATP. Asp-89 provides a ligand contact to Mg(2+). Asp-223 is a binding site for Mg(2+).

Belongs to the selenophosphate synthase 1 family. Class I subfamily. In terms of assembly, homodimer. Mg(2+) serves as cofactor.

It carries out the reaction hydrogenselenide + ATP + H2O = selenophosphate + AMP + phosphate + 2 H(+). Functionally, synthesizes selenophosphate from selenide and ATP. The sequence is that of Selenide, water dikinase from Caldanaerobacter subterraneus subsp. tengcongensis (strain DSM 15242 / JCM 11007 / NBRC 100824 / MB4) (Thermoanaerobacter tengcongensis).